The sequence spans 305 residues: Tyrosine recombinase XerC (305 aa).

The Core-binding (CB) domain maps to 1 to 93; sequence MVLDGFAAHF…SWRQYCVWLV (93 aa). A Tyr recombinase domain is found at 114 to 294; it reads RVPKALPQEW…DFDHIARLYD (181 aa). Active-site residues include Arg-155, Lys-179, His-246, Arg-249, and His-272. Catalysis depends on Tyr-281, which acts as the O-(3'-phospho-DNA)-tyrosine intermediate.

The protein belongs to the 'phage' integrase family. XerC subfamily. As to quaternary structure, forms a cyclic heterotetrameric complex composed of two molecules of XerC and two molecules of XerD.

Its subcellular location is the cytoplasm. In terms of biological role, site-specific tyrosine recombinase, which acts by catalyzing the cutting and rejoining of the recombining DNA molecules. The XerC-XerD complex is essential to convert dimers of the bacterial chromosome into monomers to permit their segregation at cell division. It also contributes to the segregational stability of plasmids. The chain is Tyrosine recombinase XerC from Neisseria meningitidis serogroup C / serotype 2a (strain ATCC 700532 / DSM 15464 / FAM18).